Reading from the N-terminus, the 509-residue chain is Mitogen-activated protein kinase sma-5 (509 aa).

Residues 19–72 form a disordered region; that stretch reads DPITSMSPPQENRSPKAEYLNNFFNTNPTNGKSRGSQEAPRKPLGQTNLNVQGS. Polar residues-rich tracts occupy residues 20–30 and 40–54; these read PITSMSPPQEN and NFFN…SRGS. The Protein kinase domain occupies 105-411; sequence YEPTQNIGSG…IQDALLHPYI (307 aa). ATP-binding positions include 111–119 and K134; that span reads IGSGAFGIV. D231 (proton acceptor) is an active-site residue. The interval 460-482 is disordered; that stretch reads YSELHSGDSTGSTSDMSTNTSGE. Over residues 466–481 the composition is skewed to low complexity; it reads GDSTGSTSDMSTNTSG.

The protein belongs to the protein kinase superfamily. CMGC Ser/Thr protein kinase family. MAP kinase subfamily. Requires Mg(2+) as cofactor. As to expression, expressed in intestine with a stronger expression in the four most anterior cells, muscles, excretory cell, pharynx and, to a lesser extent, in hypodermis.

It catalyses the reaction L-seryl-[protein] + ATP = O-phospho-L-seryl-[protein] + ADP + H(+). It carries out the reaction L-threonyl-[protein] + ATP = O-phospho-L-threonyl-[protein] + ADP + H(+). Functionally, serine/threonine-protein kinase involved in the postembryonic regulation of body size, mainly through control of cell growth. In particular, controls the volume of intestine, muscles and hypodermis. In addition, regulates growth, intestinal granule distribution, lifespan and number of offspring. The chain is Mitogen-activated protein kinase sma-5 from Caenorhabditis elegans.